Here is a 96-residue protein sequence, read N- to C-terminus: MAKYEILYIIRPNIEEEAKNALVARFDSILTDNGATVVESKDWEKRRLAYEIQDFREGIYHVVNVEANDATALNEFDRLSKINGDILRHMIVKLDA.

This sequence belongs to the bacterial ribosomal protein bS6 family.

Binds together with bS18 to 16S ribosomal RNA. This Streptococcus thermophilus (strain ATCC BAA-491 / LMD-9) protein is Small ribosomal subunit protein bS6.